A 771-amino-acid polypeptide reads, in one-letter code: Rho GTPase-activating protein 26 (771 aa).

Residues 7–262 (EFSDCYLDSP…MKENPHEHLA (256 aa)) enclose the BAR domain. Residues 265–369 (PFTMEGYLYV…WMEAMDGREP (105 aa)) form the PH domain. Residues 383–568 (AQLDNIGFSI…IIIENYEEMF (186 aa)) form the Rho-GAP domain. Positions 575-712 (PQTNSQLHLS…SSTSSDSSPV (138 aa)) are disordered. Positions 608-617 (HSSEKEEKRN) are enriched in basic and acidic residues. Low complexity predominate over residues 618–637 (SVNSSAESVSSSNANSSVNS). Composition is skewed to polar residues over residues 638–650 (TCTQ…NLNA) and 662–671 (RPNSLLNPKN). 2 stretches are compositionally biased toward low complexity: residues 673 to 683 (SGLLPSSLNPS) and 691 to 712 (PMVS…SSPV). The region spanning 713–771 (SVPRKAKALYACKAEHDSELSFSAGTVFENVCPSQEPGWLEGTLNGKTGLIPENYVEFL) is the SH3 domain.

Its subcellular location is the cell junction. It localises to the focal adhesion. It is found in the cytoplasm. The protein resides in the cytoskeleton. The protein localises to the endosome membrane. Its function is as follows. GTPase-activating protein for rhoa and cdc42. May be involved in the regulation of neosynthesized protein export through a Rab-endososomal dependent export route. The sequence is that of Rho GTPase-activating protein 26 (arhgap26) from Xenopus laevis (African clawed frog).